The primary structure comprises 240 residues: Purine nucleoside phosphorylase RC0672 (240 aa).

Zn(2+) contacts are provided by histidine 60, cysteine 96, and histidine 113.

The protein belongs to the purine nucleoside phosphorylase YfiH/LACC1 family. In terms of assembly, homodimer. Cu(2+) serves as cofactor. The cofactor is Zn(2+).

It catalyses the reaction adenosine + phosphate = alpha-D-ribose 1-phosphate + adenine. The catalysed reaction is S-methyl-5'-thioadenosine + phosphate = 5-(methylsulfanyl)-alpha-D-ribose 1-phosphate + adenine. It carries out the reaction inosine + phosphate = alpha-D-ribose 1-phosphate + hypoxanthine. The enzyme catalyses adenosine + H2O + H(+) = inosine + NH4(+). In terms of biological role, purine nucleoside enzyme that catalyzes the phosphorolysis of adenosine and inosine nucleosides, yielding D-ribose 1-phosphate and the respective free bases, adenine and hypoxanthine. Also catalyzes the phosphorolysis of S-methyl-5'-thioadenosine into adenine and S-methyl-5-thio-alpha-D-ribose 1-phosphate. Also has adenosine deaminase activity. This chain is Purine nucleoside phosphorylase RC0672, found in Rickettsia conorii (strain ATCC VR-613 / Malish 7).